The primary structure comprises 343 residues: Multidrug resistance protein MdtN (343 aa).

Residues 1-12 lie on the Cytoplasmic side of the membrane; it reads MESTPKKAPRSK. The helical; Signal-anchor for type II membrane protein transmembrane segment at 13–33 threads the bilayer; that stretch reads FPALLVVALALVALVFVIWRV. Residues 34 to 343 are Periplasmic-facing; sequence DSAPSTNDAY…ASAVANLEPQ (310 aa).

The protein belongs to the membrane fusion protein (MFP) (TC 8.A.1) family. Could be part of a tripartite efflux system composed of MdtN, MdtO and MdtP.

It is found in the cell inner membrane. Its function is as follows. Could be involved in resistance to puromycin, acriflavine and tetraphenylarsonium chloride. This is Multidrug resistance protein MdtN (mdtN) from Shigella flexneri.